The chain runs to 362 residues: Protein BIG GRAIN 1-like D (362 aa).

3 disordered regions span residues Ile22–His113, Lys132–Ile168, and Val303–Ser327. Residues Asp23–Thr47 are compositionally biased toward polar residues. Basic and acidic residues predominate over residues Val50–Phe60. Residues Ser63–Ser78 show a composition bias toward low complexity. Residues Lys132–Arg144 are compositionally biased toward basic and acidic residues. Residues Glu309–Ala324 show a composition bias toward acidic residues.

Belongs to the BIG GRAIN 1 (BG1) plant protein family.

The protein resides in the cell membrane. Functionally, involved in auxin transport. Regulator of the auxin signaling pathway. The polypeptide is Protein BIG GRAIN 1-like D (Arabidopsis thaliana (Mouse-ear cress)).